The primary structure comprises 169 residues: Ribosome maturation factor RimM (169 aa).

The 73-residue stretch at 97 to 169 folds into the PRC barrel domain; the sequence is EDEVYFKDLI…KIVVDWEYDY (73 aa).

This sequence belongs to the RimM family. As to quaternary structure, binds ribosomal protein uS19.

Its subcellular location is the cytoplasm. An accessory protein needed during the final step in the assembly of 30S ribosomal subunit, possibly for assembly of the head region. Essential for efficient processing of 16S rRNA. May be needed both before and after RbfA during the maturation of 16S rRNA. It has affinity for free ribosomal 30S subunits but not for 70S ribosomes. The polypeptide is Ribosome maturation factor RimM (Francisella tularensis subsp. tularensis (strain FSC 198)).